The sequence spans 129 residues: Small ribosomal subunit protein uS11 (129 aa).

The protein belongs to the universal ribosomal protein uS11 family. Part of the 30S ribosomal subunit. Interacts with proteins S7 and S18. Binds to IF-3.

In terms of biological role, located on the platform of the 30S subunit, it bridges several disparate RNA helices of the 16S rRNA. Forms part of the Shine-Dalgarno cleft in the 70S ribosome. The chain is Small ribosomal subunit protein uS11 from Bartonella quintana (strain Toulouse) (Rochalimaea quintana).